Here is a 329-residue protein sequence, read N- to C-terminus: Quinone oxidoreductase (329 aa).

A2 bears the N-acetylalanine mark. K23 is subject to N6-acetyllysine. NADP(+) is bound by residues Y53, S158–V161, G181, H200, N229, V246–R249, and V269–V271. Phosphoserine is present on S248. At K296 the chain carries N6-succinyllysine.

Belongs to the zinc-containing alcohol dehydrogenase family. Quinone oxidoreductase subfamily. In terms of assembly, homotetramer.

It is found in the cytoplasm. It catalyses the reaction 2 a quinone + NADPH + H(+) = 2 a 1,4-benzosemiquinone + NADP(+). Its function is as follows. Does not have alcohol dehydrogenase activity. Binds NADP and acts through a one-electron transfer process. Orthoquinones, such as 1,2-naphthoquinone or 9,10-phenanthrenequinone, are the best substrates (in vitro). May act in the detoxification of xenobiotics. Interacts with (AU)-rich elements (ARE) in the 3'-UTR of target mRNA species and enhances their stability. NADPH binding interferes with mRNA binding. This is Quinone oxidoreductase (CRYZ) from Pongo abelii (Sumatran orangutan).